The primary structure comprises 117 residues: MARVTVEDCVDKVPNRFELVMLAAHRAREISAGSAPTVNRDNDKNPAVSLREIAEETQSADDLRERLIESNQHQIEVDEPEEDAMALLMGAEQDKPEEDSMSEEMLLRQLMAAQGQG.

The protein belongs to the RNA polymerase subunit omega family. In terms of assembly, the RNAP catalytic core consists of 2 alpha, 1 beta, 1 beta' and 1 omega subunit. When a sigma factor is associated with the core the holoenzyme is formed, which can initiate transcription.

It catalyses the reaction RNA(n) + a ribonucleoside 5'-triphosphate = RNA(n+1) + diphosphate. Functionally, promotes RNA polymerase assembly. Latches the N- and C-terminal regions of the beta' subunit thereby facilitating its interaction with the beta and alpha subunits. In Roseobacter denitrificans (strain ATCC 33942 / OCh 114) (Erythrobacter sp. (strain OCh 114)), this protein is DNA-directed RNA polymerase subunit omega.